A 168-amino-acid polypeptide reads, in one-letter code: Photosystem I assembly protein Ycf3 (168 aa).

TPR repeat units follow at residues 35-68 (AFTY…EIDP), 72-105 (SYIL…NPFL), and 120-153 (GEQA…TPGN).

The protein belongs to the Ycf3 family.

It localises to the plastid. The protein localises to the chloroplast thylakoid membrane. Functionally, essential for the assembly of the photosystem I (PSI) complex. May act as a chaperone-like factor to guide the assembly of the PSI subunits. The chain is Photosystem I assembly protein Ycf3 from Phaseolus vulgaris (Kidney bean).